The following is a 50-amino-acid chain: Fungus-induced protein 3 (50 aa).

In Caenorhabditis elegans, this protein is Fungus-induced protein 3 (fip-3).